We begin with the raw amino-acid sequence, 251 residues long: 5-oxoprolinase subunit A 2 (251 aa).

This sequence belongs to the LamB/PxpA family. Forms a complex composed of PxpA, PxpB and PxpC.

The catalysed reaction is 5-oxo-L-proline + ATP + 2 H2O = L-glutamate + ADP + phosphate + H(+). Functionally, catalyzes the cleavage of 5-oxoproline to form L-glutamate coupled to the hydrolysis of ATP to ADP and inorganic phosphate. The sequence is that of 5-oxoprolinase subunit A 2 from Pseudomonas syringae pv. tomato (strain ATCC BAA-871 / DC3000).